The sequence spans 509 residues: Methylmalonyl-CoA decarboxylase subunit alpha (509 aa).

In terms of domain architecture, CoA carboxyltransferase N-terminal spans valine 4–aspartate 260. A CoA carboxyltransferase C-terminal domain is found at arginine 267–lysine 503.

This sequence belongs to the AccD/PCCB family. In terms of assembly, the methylmalonyl-CoA decarboxylase is composed of five subunits: the carboxyltransferase alpha subunit (MmdA), the tunnel beta subunit (MmdB), the biotin-containing gamma subunit (MmdC), and the delta (MmdD) and epsilon (MmdE) subunits. Interacts with the gamma subunit.

The protein localises to the cell membrane. The catalysed reaction is (S)-methylmalonyl-CoA + Na(+)(in) + H(+)(out) = propanoyl-CoA + Na(+)(out) + CO2. Completely inhibited by avidin. In terms of biological role, carboxyltransferase subunit of the sodium ion pump methylmalonyl-CoA decarboxylase, which converts the chemical energy of a decarboxylation reaction into an electrochemical gradient of Na(+) ions across the cytoplasmic membrane, thereby creating a sodium ion motive force that is used for ATP synthesis. The alpha subunit catalyzes the Na(+)-independent carboxyltransfer from methylmalonyl-CoA to the prosthetic biotin group located on the gamma subunit. Can also convert malonyl-CoA into acetyl-CoA. This is Methylmalonyl-CoA decarboxylase subunit alpha from Veillonella parvula (Staphylococcus parvulus).